The primary structure comprises 249 residues: 4-hydroxy-tetrahydrodipicolinate reductase (249 aa).

NAD(+) is bound by residues aspartate 32, 74-76, and 99-102; these read GTT and SANF. Histidine 134 acts as the Proton donor/acceptor in catalysis. (S)-2,3,4,5-tetrahydrodipicolinate is bound at residue histidine 135. The active-site Proton donor is lysine 138. A (S)-2,3,4,5-tetrahydrodipicolinate-binding site is contributed by 144–145; that stretch reads GT.

It belongs to the DapB family.

Its subcellular location is the cytoplasm. It carries out the reaction (S)-2,3,4,5-tetrahydrodipicolinate + NAD(+) + H2O = (2S,4S)-4-hydroxy-2,3,4,5-tetrahydrodipicolinate + NADH + H(+). The enzyme catalyses (S)-2,3,4,5-tetrahydrodipicolinate + NADP(+) + H2O = (2S,4S)-4-hydroxy-2,3,4,5-tetrahydrodipicolinate + NADPH + H(+). Its pathway is amino-acid biosynthesis; L-lysine biosynthesis via DAP pathway; (S)-tetrahydrodipicolinate from L-aspartate: step 4/4. Catalyzes the conversion of 4-hydroxy-tetrahydrodipicolinate (HTPA) to tetrahydrodipicolinate. In Chlorobaculum parvum (strain DSM 263 / NCIMB 8327) (Chlorobium vibrioforme subsp. thiosulfatophilum), this protein is 4-hydroxy-tetrahydrodipicolinate reductase.